A 98-amino-acid polypeptide reads, in one-letter code: Carboxysome shell protein CsoS1C (98 aa).

Residues 8–93 (ALGMIETRGL…VHSEVENILP (86 aa)) enclose the BMC domain.

Belongs to the bacterial microcompartments protein family. CsoS1 subfamily. Homohexamer with a small central pore. Interacts with the N-terminus (residues 1-136) of RuBisCO (CbbL).

The protein localises to the carboxysome. One of shell proteins of the carboxysome, a polyhedral inclusion where RuBisCO (ribulose bisphosphate carboxylase, ccbL-ccbS) is sequestered. Assembles into hexamers which make sheets that form the facets of the polyhedral carboxysome. The shell probably limits the diffusion of CO(2) into and out of the carboxysome. There are estimated to be 2970 CsoS1A/CsoS1C proteins per carboxysome (the proteins differ by only 1 residue). Functionally, unlike beta-carboxysomes, alpha-carboxysomes (Cb) can form without cargo protein. CsoS2 is essential for Cb formation and is also capable of targeting foreign proteins to the Cb. The Cb shell assembles with the aid of CsoS2; CsoS1A, CsoS1B and CsoS1C form the majority of the shell while CsoS4A and CsoS4B form vertices. CsoS1D forms pseudohexamers that probably control metabolite flux into and out of the shell. This is Carboxysome shell protein CsoS1C from Halothiobacillus neapolitanus (strain ATCC 23641 / c2) (Thiobacillus neapolitanus).